Here is an 800-residue protein sequence, read N- to C-terminus: Receptor like protein 26 (800 aa).

Positions 1–19 are cleaved as a signal peptide; that stretch reads MRLHFCSLLLLYCIVFVSS. At 20-733 the chain is on the extracellular side; the sequence is FLTTDALACL…EEEDEVIEWK (714 aa). Residues N49, N61, N83, N96, N101, and N113 are each glycosylated (N-linked (GlcNAc...) asparagine). LRR repeat units lie at residues 89–113, 115–138, 139–161, 162–185, 187–212, 214–235, 236–259, 260–281, 285–307, 308–332, 334–357, and 358–381; these read LHQL…EFSN, TRLE…ISNL, ILLT…VRNL, TKLS…LLPT, PFLS…SSSS, LVRL…ISKL, INLN…VFAP, LKSL…LSSD, PLSL…IFKT, LQNL…FWKL, RLSI…VLLN, and SSVQ…PLGS. N-linked (GlcNAc...) asparagine glycans are attached at residues N145 and N160. The N-linked (GlcNAc...) asparagine glycan is linked to N207. N247 carries N-linked (GlcNAc...) asparagine glycosylation. 2 N-linked (GlcNAc...) asparagine glycosylation sites follow: N342 and N357. The stretch at 382-401 is one LRR 13; degenerate repeat; the sequence is IYLSAWNNSFTGNIPLSICN. N388 and N401 each carry an N-linked (GlcNAc...) asparagine glycan. 10 LRR repeats span residues 402 to 423, 424 to 446, 448 to 471, 472 to 494, 495 to 519, 522 to 546, 591 to 615, 616 to 639, 640 to 663, and 665 to 688; these read RSSL…PQCL, SNLK…EFHS, AKTQ…LLNC, SSLR…WLKA, LPNL…DRGP, FPEL…FFVN, LTFY…IGLL, KELI…LANV, TELE…LGSL, and FLAY…QFSG. N470 is a glycosylation site (N-linked (GlcNAc...) asparagine). N-linked (GlcNAc...) asparagine glycans are attached at residues N622 and N638. The chain crosses the membrane as a helical span at residues 734–754; sequence AVFFGYWPGLLLGLVMAHVIA. Over 755–800 the chain is Cytoplasmic; sequence SFKPKWFVKILGPAKGKQVDPVRLFMNLDSRWDSFNNKDTVEEEVI.

This sequence belongs to the RLP family.

It is found in the cell membrane. This is Receptor like protein 26 from Arabidopsis thaliana (Mouse-ear cress).